A 125-amino-acid chain; its full sequence is Calcitonin receptor-stimulating peptide 1 (125 aa).

A signal peptide spans 1 to 25 (MGFWKFPPFLVLSILVLYQAGMFHA). The propeptide occupies 26 to 77 (APFRSVFDGRFDPATLDEEESRLLLAAMVNDYEQMRARESEKAQKTEGSRIQ). Cys-81 and Cys-86 are joined by a disulfide.

It belongs to the calcitonin family.

The protein resides in the secreted. Its function is as follows. Stimulates cAMP production in porcine kidney cell line LLC-PK1 via the calcitonin receptor (CT) but not via the CT-like (CL) receptor. The polypeptide is Calcitonin receptor-stimulating peptide 1 (CRSP1) (Capra hircus (Goat)).